A 303-amino-acid chain; its full sequence is tRNA dimethylallyltransferase (303 aa).

Gly10 to Ser17 provides a ligand contact to ATP. Thr12 to Ser17 contacts substrate. The interval Asp35–Gln38 is interaction with substrate tRNA.

The protein belongs to the IPP transferase family. In terms of assembly, monomer. Mg(2+) serves as cofactor.

The catalysed reaction is adenosine(37) in tRNA + dimethylallyl diphosphate = N(6)-dimethylallyladenosine(37) in tRNA + diphosphate. Its function is as follows. Catalyzes the transfer of a dimethylallyl group onto the adenine at position 37 in tRNAs that read codons beginning with uridine, leading to the formation of N6-(dimethylallyl)adenosine (i(6)A). The protein is tRNA dimethylallyltransferase of Methylobacterium nodulans (strain LMG 21967 / CNCM I-2342 / ORS 2060).